The chain runs to 1090 residues: Nitrogen assimilation transcription factor nit-4 (1090 aa).

A compositionally biased stretch (polar residues) spans 1-14 (MNSSDVQMMSSQDA). Residues 1-43 (MNSSDVQMMSSQDAPGSAGLAPDNIASSLPSKKKSRRGADPTN) are disordered. Positions 53 to 81 (CIACRRRKSKCDGALPSCAACASVYGTEC) form a DNA-binding region, zn(2)-C6 fungal-type. Disordered regions lie at residues 145-176 (RRDEKNATATNDNDDSDEPTQPGRDDATSQAV), 666-689 (FSTSEVPSPNRTAPSLAPSSPAPP), 773-798 (HQHHHHLQNQHQPQQPHHNHMTYQQQ), 825-875 (GIPT…VKPP), 936-999 (QGWD…QRQQ), and 1033-1053 (HGAERGGGGIESTGMGMTTVG). Residues 167–176 (GRDDATSQAV) are compositionally biased toward basic and acidic residues. Over residues 666–677 (FSTSEVPSPNRT) the composition is skewed to polar residues. A compositionally biased stretch (low complexity) spans 849-859 (QPQQQQQPQAQ). 2 stretches are compositionally biased toward gly residues: residues 940–965 (LEGGGAGTATSTGGIGDGGGPTGGAG) and 976–988 (NIGGGGGGGGGST). Residues 990 to 999 (QRQQQQQRQQ) are compositionally biased toward low complexity.

It localises to the nucleus. Functionally, pathway-specific regulatory gene of nitrate assimilation; it activates the transcription of the genes for nitrate and nitrite reductases. This is Nitrogen assimilation transcription factor nit-4 (nit-4) from Neurospora crassa (strain ATCC 24698 / 74-OR23-1A / CBS 708.71 / DSM 1257 / FGSC 987).